A 176-amino-acid chain; its full sequence is NAD(P)H-quinone oxidoreductase subunit 6, chloroplastic (176 aa).

Helical transmembrane passes span 10 to 30, 33 to 53, 60 to 80, 95 to 115, and 152 to 172; these read ILVLFLGFVLLLGGLGVVLLT, IYSAFSLGLVLVCISLFYFLL, VAQLLIYVGAINVLIIFAVMF, IGDGFTSLVCITIVFSLMTTI, and FYLPFELISIILLVSLIGAIT.

It belongs to the complex I subunit 6 family. NDH is composed of at least 16 different subunits, 5 of which are encoded in the nucleus.

It localises to the plastid. It is found in the chloroplast thylakoid membrane. It carries out the reaction a plastoquinone + NADH + (n+1) H(+)(in) = a plastoquinol + NAD(+) + n H(+)(out). The catalysed reaction is a plastoquinone + NADPH + (n+1) H(+)(in) = a plastoquinol + NADP(+) + n H(+)(out). Functionally, NDH shuttles electrons from NAD(P)H:plastoquinone, via FMN and iron-sulfur (Fe-S) centers, to quinones in the photosynthetic chain and possibly in a chloroplast respiratory chain. The immediate electron acceptor for the enzyme in this species is believed to be plastoquinone. Couples the redox reaction to proton translocation, and thus conserves the redox energy in a proton gradient. The polypeptide is NAD(P)H-quinone oxidoreductase subunit 6, chloroplastic (ndhG) (Brachypodium distachyon (Purple false brome)).